The primary structure comprises 306 residues: 4-diphosphocytidyl-2-C-methyl-D-erythritol kinase (306 aa).

The active site involves Lys23. 108–118 (PIAAGIGGGSA) contributes to the ATP binding site. The active site involves Asp150.

This sequence belongs to the GHMP kinase family. IspE subfamily.

The catalysed reaction is 4-CDP-2-C-methyl-D-erythritol + ATP = 4-CDP-2-C-methyl-D-erythritol 2-phosphate + ADP + H(+). The protein operates within isoprenoid biosynthesis; isopentenyl diphosphate biosynthesis via DXP pathway; isopentenyl diphosphate from 1-deoxy-D-xylulose 5-phosphate: step 3/6. Catalyzes the phosphorylation of the position 2 hydroxy group of 4-diphosphocytidyl-2C-methyl-D-erythritol. The polypeptide is 4-diphosphocytidyl-2-C-methyl-D-erythritol kinase (Rhodopseudomonas palustris (strain BisB18)).